Consider the following 474-residue polypeptide: Hepatocyte nuclear factor 4-alpha (474 aa).

Residues 57 to 132 constitute a DNA-binding region (nuclear receptor); the sequence is SALCAICGDR…AGMKKEAVQN (76 aa). 2 consecutive NR C4-type zinc fingers follow at residues 60-80 and 96-120; these read CAIC…CDGC and CRFS…LKKC. Phosphoserine occurs at positions 142 and 143. A Phosphotyrosine modification is found at Tyr144. An NR LBD domain is found at 147–377; that stretch reads SSLPSINALL…NLLQEMLLGG (231 aa). Phosphothreonine is present on Thr166. The residue at position 167 (Ser167) is a Phosphoserine. Residues Lys234 and Lys307 each participate in a glycyl lysine isopeptide (Lys-Gly) (interchain with G-Cter in ubiquitin) cross-link. Ser313 is subject to Phosphoserine; by AMPK. The short motif at 368–376 is the 9aaTAD element; the sequence is NLLQEMLLG. Positions 419–447 are disordered; that stretch reads EWPRPRGQAATPETPQPSPPGGSGSEPYK. A phosphothreonine mark is found at Thr429 and Thr432. Ser436 carries the phosphoserine modification. Lys458 carries the post-translational modification N6-acetyllysine.

This sequence belongs to the nuclear hormone receptor family. NR2 subfamily. In terms of assembly, homodimerization is required for HNF4-alpha to bind to its recognition site. Interacts with CLOCK, BMAL1, CRY1, CRY2, PER1 and PER2. Interacts with NR0B2/SHP; the resulting heterodimer is transcriptionally inactive. Interacts with DDX3X; this interaction disrupts the interaction between HNF4 and NR0B2 that forms inactive heterodimers and enhances the formation of active HNF4 homodimers. Phosphorylated on tyrosine residue(s); phosphorylation is important for its DNA-binding activity. Phosphorylation may directly or indirectly play a regulatory role in the subnuclear distribution. Phosphorylation at Ser-313 by AMPK reduces the ability to form homodimers and bind DNA. In terms of processing, acetylation at Lys-458 lowers transcriptional activation by about two-fold.

Its subcellular location is the nucleus. Transcriptional regulator which controls the expression of hepatic genes during the transition of endodermal cells to hepatic progenitor cells, facilitating the recruitment of RNA pol II to the promoters of target genes. Activates the transcription of CYP2C38. Represses the CLOCK-BMAL1 transcriptional activity and is essential for circadian rhythm maintenance and period regulation in the liver and colon cells. In Homo sapiens (Human), this protein is Hepatocyte nuclear factor 4-alpha (HNF4A).